The chain runs to 389 residues: MKTGHFEIVTMLLATMILVDIFQVKAEVLDMADNAFDDEYLKCTDRMEIKYVPQLLKEEKASHQQLDTVWENAKAKWAARKTQIFLPMNFKDNHGIALMAYISEAQEQTPFYHLFSEAVKMAGQSREDYIYGFQFKAFHFYLTRALQLLRKPCEASSKTVVYRTSQGTSFTFGGLNQARFGHFTLAYSAKPQAANDQLTVLSIYTCLGVDIENFLDKESERITLIPLNEVFQVSQEGAGNNLILQSINKTCSHYECAFLGGLKTENCIENLEYFQPIYVYNPGEKNQKLEDHSEKNWKLEDHGEKNQKLEDHGVKILEPTQIPGMKIPEPFPLPEDKSQGNINNPTPGPVPVPGPKSHPSASSGKLLLPQFGMVIILISVSAINLFVAL.

The first 26 residues, 1–26, serve as a signal peptide directing secretion; the sequence is MKTGHFEIVTMLLATMILVDIFQVKA. Cys43 and Cys256 are oxidised to a cystine. Residues 64-251 form the TR mART core domain; it reads QQLDTVWENA…LILQSINKTC (188 aa). NAD(+)-binding residues include Tyr101 and Arg163. N-linked (GlcNAc...) asparagine glycosylation is present at Asn248. A run of 3 repeats spans residues 283–292, 293–302, and 303–312. A 3 X 10 AA tandem repeats of [GS]-E-K-N-[QW]-K-L-E-D-H region spans residues 283–312; that stretch reads GEKNQKLEDHSEKNWKLEDHGEKNQKLEDH. Residues 325–362 form a disordered region; it reads MKIPEPFPLPEDKSQGNINNPTPGPVPVPGPKSHPSAS. A glycan (O-linked (GalNAc...) threonine) is linked at Thr346. Residues 346–356 are compositionally biased toward pro residues; that stretch reads TPGPVPVPGPK. A lipid anchor (GPI-anchor amidated serine) is attached at Ser362. Residues 363-389 constitute a propeptide, removed in mature form; that stretch reads SGKLLLPQFGMVIILISVSAINLFVAL.

Belongs to the Arg-specific ADP-ribosyltransferase family. In terms of processing, O-glycosylated with core 1 or possibly core 8 glycans. As to expression, testis specific.

It is found in the cell membrane. The catalysed reaction is L-arginyl-[protein] + NAD(+) = N(omega)-(ADP-D-ribosyl)-L-arginyl-[protein] + nicotinamide + H(+). The protein is Ecto-ADP-ribosyltransferase 3 (ART3) of Homo sapiens (Human).